We begin with the raw amino-acid sequence, 357 residues long: DENN domain-containing protein 10 (357 aa).

The uDENN domain maps to 1 to 140; that stretch reads MAAAEVADTQ…TKGICQSEEN (140 aa). The region spanning 165–299 is the cDENN domain; that stretch reads QFGMETVILH…PEKSESHVIQ (135 aa). Residues 301 to 357 enclose the dDENN domain; sequence IALKTREIFTNLAPFSEVSADGEKRVLNLEALKQKRFPPATENFLYHLAAAEQMLKI.

Belongs to the DENND10 family. Interacts with the coiled-coil heterodimer of CCDC22 and CCDC93; the interaction is direct. Interacts with RAB27A and RAB27B (GDP-bound forms preferentially).

The protein resides in the late endosome. In terms of biological role, guanine nucleotide exchange factor (GEF) regulating homeostasis of late endocytic pathway, including endosomal positioning, maturation and secretion, possibly through activating Rab proteins such as RAB27A and RAB27B. Promotes the exchange of GDP to GTP, converting inactive GDP-bound RAB27A and RAB27B into their active GTP-bound form. The protein is DENN domain-containing protein 10 of Homo sapiens (Human).